The primary structure comprises 275 residues: Large ribosomal subunit protein uL2c (275 aa).

Positions 224–275 (AMNPVDHPHGGGEGRTPIGRKKPVTPWGYSALGKKSRKRNRYSDASILRRRE) are disordered.

This sequence belongs to the universal ribosomal protein uL2 family. Part of the 50S ribosomal subunit.

Its subcellular location is the plastid. The protein resides in the chloroplast. The protein is Large ribosomal subunit protein uL2c (rpl2) of Picea abies (Norway spruce).